Reading from the N-terminus, the 293-residue chain is Small ribosomal subunit biogenesis GTPase RsgA (293 aa).

Positions 63–223 (KNQLNRPPIA…VADTPGFSSL (161 aa)) constitute a CP-type G domain. Residues 112 to 115 (SKTD) and 166 to 174 (GQSGVGKSS) contribute to the GTP site. Positions 247, 252, 254, and 260 each coordinate Zn(2+).

It belongs to the TRAFAC class YlqF/YawG GTPase family. RsgA subfamily. In terms of assembly, monomer. Associates with 30S ribosomal subunit, binds 16S rRNA. Zn(2+) serves as cofactor.

The protein localises to the cytoplasm. Functionally, one of several proteins that assist in the late maturation steps of the functional core of the 30S ribosomal subunit. Helps release RbfA from mature subunits. May play a role in the assembly of ribosomal proteins into the subunit. Circularly permuted GTPase that catalyzes slow GTP hydrolysis, GTPase activity is stimulated by the 30S ribosomal subunit. The protein is Small ribosomal subunit biogenesis GTPase RsgA of Shouchella clausii (strain KSM-K16) (Alkalihalobacillus clausii).